A 291-amino-acid polypeptide reads, in one-letter code: Elongation factor Ts (291 aa).

Residues 79–82 (TDFV) are involved in Mg(2+) ion dislocation from EF-Tu.

Belongs to the EF-Ts family.

It is found in the cytoplasm. Associates with the EF-Tu.GDP complex and induces the exchange of GDP to GTP. It remains bound to the aminoacyl-tRNA.EF-Tu.GTP complex up to the GTP hydrolysis stage on the ribosome. The chain is Elongation factor Ts from Dinoroseobacter shibae (strain DSM 16493 / NCIMB 14021 / DFL 12).